The primary structure comprises 975 residues: Lateral signaling target protein 2 homolog (975 aa).

2 disordered regions span residues 299–458 (PLGS…GTDE) and 504–523 (YGTA…PSTS). 4 stretches are compositionally biased toward low complexity: residues 302–352 (SSSI…TTNT), 365–376 (NNHNSNSNSSSN), 383–400 (TLRS…TPTA), and 408–429 (PSHS…PADW). The span at 430–458 (SDGDDEDEDDDDIDVDEEDPESSDDGTDE) shows a compositional bias: acidic residues. Phosphoserine occurs at positions 540 and 541. 2 disordered regions span residues 556 to 633 (EEHM…SSLS) and 740 to 891 (DNVF…SPPA). Residues 564 to 602 (GRHHRHHQSHHHHHHHRHSHQHQHRQPHPHRTTRSGRKR) are compositionally biased toward basic residues. Residues 621 to 633 (LASGDTSAASSLS) are compositionally biased toward low complexity. Over residues 751-770 (ATGQRHSAGASMQRNNTIDL) the composition is skewed to polar residues. Ser-796 is subject to Phosphoserine. Low complexity-rich tracts occupy residues 802–860 (AASS…PVSA) and 877–890 (PSSA…LSPP). An FYVE-type zinc finger spans residues 895-955 (DGKAPRCMAC…VCRDCYVREV (61 aa)). 8 residues coordinate Zn(2+): Cys-901, Cys-904, Cys-917, Cys-920, Cys-925, Cys-928, Cys-947, and Cys-950.

The protein belongs to the lst-2 family.

Its function is as follows. Negative regulator of epidermal growth factor receptor (EGFR) signaling. In Drosophila sechellia (Fruit fly), this protein is Lateral signaling target protein 2 homolog.